We begin with the raw amino-acid sequence, 281 residues long: MAIKKFKAYTNGRRNMSSLDYQANLSGHRPEKSLLVALPTHSGRNNQGKITTRHHGGRLKRFYRLVDFKRNKDDILATVKTIEYDPNRSANISLVVYADGEKRYIISPKGLKVGQKIISGEQVDIQIGNSLPLKNIPEGTYVHNIEMQPKQGGVIARSAGSSAQILGKDETGRYIILRLKSGEVRKILALCRATVGEVGNEEHSLVNIGKAGRNRLRGIRPTVRGSAMNPNDHPHGGGEGHQPIGRKSPMTPWGKKALGVKTRKTKKASNQFIIRRRKESK.

A disordered region spans residues 224-281; that stretch reads RGSAMNPNDHPHGGGEGHQPIGRKSPMTPWGKKALGVKTRKTKKASNQFIIRRRKESK.

This sequence belongs to the universal ribosomal protein uL2 family. As to quaternary structure, part of the 50S ribosomal subunit. Forms a bridge to the 30S subunit in the 70S ribosome.

Its function is as follows. One of the primary rRNA binding proteins. Required for association of the 30S and 50S subunits to form the 70S ribosome, for tRNA binding and peptide bond formation. It has been suggested to have peptidyltransferase activity; this is somewhat controversial. Makes several contacts with the 16S rRNA in the 70S ribosome. This Metamycoplasma arthritidis (strain 158L3-1) (Mycoplasma arthritidis) protein is Large ribosomal subunit protein uL2.